The primary structure comprises 370 residues: Quinolinate synthase (370 aa).

Iminosuccinate contacts are provided by His-62 and Ser-83. Cys-128 is a binding site for [4Fe-4S] cluster. Residues 154–156 and Ser-171 each bind iminosuccinate; that span reads YAN. Cys-215 contributes to the [4Fe-4S] cluster binding site. Residues 241–243 and Thr-258 each bind iminosuccinate; that span reads HPE. Residue Cys-312 coordinates [4Fe-4S] cluster.

This sequence belongs to the quinolinate synthase family. Type 1 subfamily. Requires [4Fe-4S] cluster as cofactor.

It localises to the cytoplasm. It carries out the reaction iminosuccinate + dihydroxyacetone phosphate = quinolinate + phosphate + 2 H2O + H(+). It functions in the pathway cofactor biosynthesis; NAD(+) biosynthesis; quinolinate from iminoaspartate: step 1/1. In terms of biological role, catalyzes the condensation of iminoaspartate with dihydroxyacetone phosphate to form quinolinate. The protein is Quinolinate synthase of Neisseria meningitidis serogroup B (strain ATCC BAA-335 / MC58).